A 178-amino-acid polypeptide reads, in one-letter code: Large ribosomal subunit protein bL17 (178 aa).

The tract at residues 150–178 (PADEPVVAEENAPQSAVKDAVDECEGKAD) is disordered. Basic and acidic residues predominate over residues 168–178 (DAVDECEGKAD).

It belongs to the bacterial ribosomal protein bL17 family. Part of the 50S ribosomal subunit. Contacts protein L32.

The protein is Large ribosomal subunit protein bL17 of Geobacter metallireducens (strain ATCC 53774 / DSM 7210 / GS-15).